The sequence spans 684 residues: MTYQKKHQHLRIELASPEQIRNWAERVLPNGEIVGQVTKPYTLHYKTHKPEKDGLFCEKIFGPIKSGICACGKYQGIEKKKENIKFCEQCGVEFIESRIRRYRMGYIKLACSVTHVWYLKRLPSYIANLLAKPLKELESLVYCDLFLARPITKKPTLLKLQGLFKYEDQSWKDIFPRFFSPRGFEVFQNREIATGGDAIQKQLTNLNLQNVINLAHLEWKEFAEQKSTGNEWEDRKIQRRKDLLVRRIKLAKHFIQTNIKPEWMVLSLLPVLPPELRPMIELGEGELITSDLNELYRRVIYRNNTLLDFLARSGSTPGGLVVCQKRLVQEAVDALIDNGIRGQPMKDSHNRPYKSFSDLIEGKEGRFRENLLGKRVDYSGRSVIVVGPFLPLHQCGLPREMAIELFQAFVIRGLIGRNFAPNLRAAKTMIQNKEPIIWKVLQEVMQGHPILLNRAPTLHRLGIQAFQPILVNGRAIHLHPLVCGGFNADFDGDQMAVHIPLSLEAQAEARLLMLSHKNLLSPATGEPISVPSQDMLLGLYILTIENNQGIYGNKYNPSKKYDSKKKFSQIPYFSSYDNVFRALQQKQIYLHSSLWLRWQINLRIITLLNQEGPIEIQYKSFGNSFQIYEHYQLRKNKNQEIISTYICTTAGRILFNQQIEEAIQGTYKASLKQKTFVQKIEKNG.

Residues Cys-69, Cys-71, Cys-87, and Cys-90 each coordinate Zn(2+). Mg(2+)-binding residues include Asp-489, Asp-491, and Asp-493.

The protein belongs to the RNA polymerase beta' chain family. RpoC1 subfamily. In plastids the minimal PEP RNA polymerase catalytic core is composed of four subunits: alpha, beta, beta', and beta''. When a (nuclear-encoded) sigma factor is associated with the core the holoenzyme is formed, which can initiate transcription. Mg(2+) serves as cofactor. Zn(2+) is required as a cofactor.

Its subcellular location is the plastid. It is found in the chloroplast. It carries out the reaction RNA(n) + a ribonucleoside 5'-triphosphate = RNA(n+1) + diphosphate. DNA-dependent RNA polymerase catalyzes the transcription of DNA into RNA using the four ribonucleoside triphosphates as substrates. This is DNA-directed RNA polymerase subunit beta' from Marchantia polymorpha (Common liverwort).